The chain runs to 225 residues: ATP-dependent dethiobiotin synthetase BioD (225 aa).

ATP is bound at residue 12–17; sequence GVGKTV. Thr-16 provides a ligand contact to Mg(2+). Lys-37 is an active-site residue. Residue Thr-41 participates in substrate binding. ATP contacts are provided by residues Asp-49, 108 to 111, and 197 to 199; these read EGAG and PAG. Mg(2+) contacts are provided by Asp-49 and Glu-108.

Belongs to the dethiobiotin synthetase family. Homodimer. Requires Mg(2+) as cofactor.

It is found in the cytoplasm. It catalyses the reaction (7R,8S)-7,8-diammoniononanoate + CO2 + ATP = (4R,5S)-dethiobiotin + ADP + phosphate + 3 H(+). Its pathway is cofactor biosynthesis; biotin biosynthesis; biotin from 7,8-diaminononanoate: step 1/2. In terms of biological role, catalyzes a mechanistically unusual reaction, the ATP-dependent insertion of CO2 between the N7 and N8 nitrogen atoms of 7,8-diaminopelargonic acid (DAPA, also called 7,8-diammoniononanoate) to form a ureido ring. The chain is ATP-dependent dethiobiotin synthetase BioD from Mycolicibacterium smegmatis (strain ATCC 700084 / mc(2)155) (Mycobacterium smegmatis).